The chain runs to 188 residues: Peroxidase B (188 aa).

It belongs to the peroxidase family. Partially N-glycosylated.

It is found in the secreted. The catalysed reaction is 2 a phenolic donor + H2O2 = 2 a phenolic radical donor + 2 H2O. The protein is Peroxidase B of Aloe vera (Aloe).